The sequence spans 395 residues: Acetate kinase (395 aa).

Asparagine 8 is a Mg(2+) binding site. Lysine 15 is an ATP binding site. Position 89 (arginine 89) interacts with substrate. The Proton donor/acceptor role is filled by aspartate 146. Residues 206 to 210 (HLGNG), 281 to 283 (DLR), and 329 to 333 (GIGEN) each bind ATP. Residue glutamate 382 coordinates Mg(2+).

Belongs to the acetokinase family. As to quaternary structure, homodimer. The cofactor is Mg(2+). Mn(2+) is required as a cofactor.

It is found in the cytoplasm. The enzyme catalyses acetate + ATP = acetyl phosphate + ADP. Its pathway is metabolic intermediate biosynthesis; acetyl-CoA biosynthesis; acetyl-CoA from acetate: step 1/2. Its activity is regulated as follows. Induced by glucose excess, the induction may be mediated by CcpA transcriptional regulator. Its function is as follows. Catalyzes the formation of acetyl phosphate from acetate and ATP. Can also catalyze the reverse reaction. Appears to favor the formation of acetate. Involved in the secretion of excess carbohydrate. In Bacillus subtilis (strain 168), this protein is Acetate kinase.